Consider the following 1582-residue polypeptide: Sca1 complex scaffold protein scaA (1582 aa).

Low complexity-rich tracts occupy residues 1-14 and 109-131; these read MSSL…TPST and LSPS…TTST. Disordered stretches follow at residues 1–22 and 108–147; these read MSSL…TFSK and GLSP…QIKK. Residues 4–37 form a TPR 1 repeat; that stretch reads LDPSLSTTPSTNRRGTFSKAKSFRRAALNLEPQG. One copy of the TPR 2 repeat lies at 166–199; that stretch reads IYTSFPESMAFDDYMDYEESLVEWKRQVEQNLGI. Residues 246–349 form a disordered region; the sequence is IKETNSSVND…PSTGSLAGFV (104 aa). Polar residues-rich tracts occupy residues 249–267, 288–310, and 318–332; these read TNSS…PTLR, NKDN…NSGI, and SDTS…QLDG. S359 carries the post-translational modification Phosphoserine; by PKB. The gefA and gefH binding stretch occupies residues 400 to 600; sequence RSGSGFGMDH…QRQTSTWFRG (201 aa). Disordered regions lie at residues 468–493 and 686–734; these read PKNS…GVGG and SLSS…DKDK. 2 stretches are compositionally biased toward gly residues: residues 478–493 and 694–714; these read GSGG…GVGG and QQQG…GSGS. Positions 715-726 are enriched in low complexity; sequence GLNMSGTSGSSG. The stretch at 742–777 is one TPR 3 repeat; sequence MHSINNTTNVGTKEDRRQYTKILQTYEQRLQFSFRL. Positions 864-875 are enriched in gly residues; sequence GGGSGGASGGGI. Residues 864 to 978 form a disordered region; sequence GGGSGGASGG…GSISTHPNTP (115 aa). Residues 903–928 show a composition bias toward low complexity; sequence HIPSGSSLLSSPPNRQGSTGSFSFIG. Residues 940-953 are compositionally biased toward polar residues; sequence NSSSLESPRTQSQL. Positions 960 to 972 are enriched in low complexity; it reads GSSPRSHSGGSIS. The segment at 1000-1400 is pppA and pho2B binding; that stretch reads FLDLTNEKLA…SIKKEGNLYN (401 aa). Residues 1080–1113 form a TPR 4 repeat; it reads TQEVVRLVFVYYYLGIIQERLNFFSNNVGILGFV.

Component of the Sca1 complex composed of at least gefA, gefH, scaA, phr, and the protein phosphatase 2A subunits pppA and pho2B. In terms of processing, phosphorylated at Ser-359 by PKB and PKBR1 is induced by chemoattractant.

Its subcellular location is the cell membrane. Component of the Sca1 complex, a regulator of cell motility, chemotaxis and signal relay. The Sca1 complex is recruited to the plasma membrane in a chemoattractant- and F-actin-dependent manner and is enriched at the leading edge of chemotaxing cells where it regulates F-actin dynamics and signal relay by controlling the activation of rasC and the downstream target of rapamycin complex 2 (TORC2)-Akt/protein kinase B (PKB) pathway. ScaA acts as a molecular scaffold, bringing together gefA, gefH and phr with PP2A. This is Sca1 complex scaffold protein scaA from Dictyostelium discoideum (Social amoeba).